Here is a 622-residue protein sequence, read N- to C-terminus: 4-hydroxyphenylalkanoate adenylyltransferase (622 aa).

It belongs to the ATP-dependent AMP-binding enzyme family.

It carries out the reaction 17-(4-hydroxyphenyl)heptadecanoate + holo-[(phenol)carboxyphthiodiolenone synthase] + ATP = 17-(4-hydroxyphenyl)heptadecanoyl-[(phenol)carboxyphthiodiolenone synthase] + AMP + diphosphate. The enzyme catalyses 19-(4-hydroxyphenyl)nonadecanoate + holo-[(phenol)carboxyphthiodiolenone synthase] + ATP = 19-(4-hydroxyphenyl)nonadecanoyl-[(phenol)carboxyphthiodiolenone synthase] + AMP + diphosphate. The protein operates within lipid metabolism; fatty acid biosynthesis. Its function is as follows. Catalyzes the activation of long-chain fatty acids as acyl-adenylates (acyl-AMP), which are then transferred to the multifunctional polyketide synthase PpsA for further chain extension. Involved in the biosynthesis of phenolphthiocerol, which is an important intermediate in the biosynthesis of phenolic glycolipid (PGL), also called mycosid B. This is 4-hydroxyphenylalkanoate adenylyltransferase (fadD29) from Mycobacterium marinum (strain ATCC BAA-535 / M).